A 357-amino-acid chain; its full sequence is BLOC-1-related complex subunit 6 (357 aa).

The segment at 20 to 196 is disordered; that stretch reads HQALVFGGGP…SGAGGGRRAT (177 aa). The segment covering 90–99 has biased composition (low complexity); sequence GAGSRRGAPG. A compositionally biased stretch (acidic residues) spans 138–149; that stretch reads EQQEEEDNDEEA. The span at 150 to 162 shows a compositional bias: low complexity; the sequence is AAGSRAGRSFSSR. Ser168 is modified (phosphoserine). The residue at position 196 (Thr196) is a Phosphothreonine. Position 199 is a phosphoserine (Ser199). The tract at residues 227–256 is disordered; the sequence is LSGAPPPPPSAPARPCPAPAPTPTPAIPPI. Over residues 230-256 the composition is skewed to pro residues; sequence APPPPPSAPARPCPAPAPTPTPAIPPI.

It belongs to the BORCS6 family. As to quaternary structure, component of the BLOC-one-related complex (BORC) which is composed of BLOC1S1, BLOC1S2, BORCS5, BORCS6, BORCS7, BORCS8, KXD1 and SNAPIN.

It is found in the lysosome membrane. As part of the BORC complex may play a role in lysosomes movement and localization at the cell periphery. Associated with the cytosolic face of lysosomes, the BORC complex may recruit ARL8B and couple lysosomes to microtubule plus-end-directed kinesin motor. The chain is BLOC-1-related complex subunit 6 from Homo sapiens (Human).